The primary structure comprises 189 residues: Pyridoxal 5'-phosphate synthase subunit PdxT (189 aa).

52 to 54 (GES) contacts L-glutamine. C81 functions as the Nucleophile in the catalytic mechanism. L-glutamine is bound by residues R108 and 136–137 (IR). Catalysis depends on charge relay system residues H172 and E174.

This sequence belongs to the glutaminase PdxT/SNO family. As to quaternary structure, in the presence of PdxS, forms a dodecamer of heterodimers. Only shows activity in the heterodimer.

It catalyses the reaction aldehydo-D-ribose 5-phosphate + D-glyceraldehyde 3-phosphate + L-glutamine = pyridoxal 5'-phosphate + L-glutamate + phosphate + 3 H2O + H(+). The catalysed reaction is L-glutamine + H2O = L-glutamate + NH4(+). It participates in cofactor biosynthesis; pyridoxal 5'-phosphate biosynthesis. Catalyzes the hydrolysis of glutamine to glutamate and ammonia as part of the biosynthesis of pyridoxal 5'-phosphate. The resulting ammonia molecule is channeled to the active site of PdxS. This Haemophilus ducreyi (strain 35000HP / ATCC 700724) protein is Pyridoxal 5'-phosphate synthase subunit PdxT.